Reading from the N-terminus, the 245-residue chain is 1-(5-phosphoribosyl)-5-[(5-phosphoribosylamino)methylideneamino] imidazole-4-carboxamide isomerase (245 aa).

Catalysis depends on D10, which acts as the Proton acceptor. D135 (proton donor) is an active-site residue.

Belongs to the HisA/HisF family.

Its subcellular location is the cytoplasm. The catalysed reaction is 1-(5-phospho-beta-D-ribosyl)-5-[(5-phospho-beta-D-ribosylamino)methylideneamino]imidazole-4-carboxamide = 5-[(5-phospho-1-deoxy-D-ribulos-1-ylimino)methylamino]-1-(5-phospho-beta-D-ribosyl)imidazole-4-carboxamide. It functions in the pathway amino-acid biosynthesis; L-histidine biosynthesis; L-histidine from 5-phospho-alpha-D-ribose 1-diphosphate: step 4/9. This is 1-(5-phosphoribosyl)-5-[(5-phosphoribosylamino)methylideneamino] imidazole-4-carboxamide isomerase from Methanosarcina acetivorans (strain ATCC 35395 / DSM 2834 / JCM 12185 / C2A).